The chain runs to 394 residues: Elongation factor Tu 1 (394 aa).

The 195-residue stretch at 10–204 folds into the tr-type G domain; that stretch reads KPHVNVGTIG…ALDSYIPEPE (195 aa). Positions 19 to 26 are G1; sequence GHVDHGKT. Position 19–26 (19–26) interacts with GTP; the sequence is GHVDHGKT. Threonine 26 provides a ligand contact to Mg(2+). A G2 region spans residues 60–64; that stretch reads GITIN. The tract at residues 81-84 is G3; the sequence is DCPG. GTP is bound by residues 81-85 and 136-139; these read DCPGH and NKCD. Residues 136–139 form a G4 region; that stretch reads NKCD. Residues 174-176 form a G5 region; the sequence is SAL.

The protein belongs to the TRAFAC class translation factor GTPase superfamily. Classic translation factor GTPase family. EF-Tu/EF-1A subfamily. Monomer.

The protein resides in the cytoplasm. The catalysed reaction is GTP + H2O = GDP + phosphate + H(+). Its function is as follows. GTP hydrolase that promotes the GTP-dependent binding of aminoacyl-tRNA to the A-site of ribosomes during protein biosynthesis. The protein is Elongation factor Tu 1 of Shewanella oneidensis (strain ATCC 700550 / JCM 31522 / CIP 106686 / LMG 19005 / NCIMB 14063 / MR-1).